A 984-amino-acid polypeptide reads, in one-letter code: Serine/threonine-protein kinase Nek9 (984 aa).

At serine 2 the chain carries N-acetylserine. Phosphoserine occurs at positions 2, 13, 16, and 20. Residues 14–43 are disordered; that stretch reads INSDFGSESGGGGDSGPGPSAVPGPRAGGG. Phosphotyrosine is present on tyrosine 52. A Protein kinase domain is found at 52–308; that stretch reads YIPIRVLGRG…ADALLDLPLL (257 aa). 58-66 is an ATP binding site; the sequence is LGRGAFGEA. Phosphoserine is present on serine 76. Lysine 81 serves as a coordination point for ATP. The active-site Proton acceptor is the aspartate 176. Residue threonine 210 is modified to Phosphothreonine; by autocatalysis. Position 254 is a phosphothreonine (threonine 254). A Phosphoserine modification is found at serine 331. Threonine 333 carries the post-translational modification Phosphothreonine. RCC1 repeat units follow at residues 388–444, 445–498, 499–550, 551–615, 616–668, and 669–726; these read KELY…VTDE, GQLY…LTRN, KEVY…LTQS, GKVL…IDER, GRLL…ATDD, and NHIF…IVEK. Residues 732–896 are interaction with NEK6; it reads TIRSNSSGLS…GKALTSAACA (165 aa). Serine 741 carries the phosphoserine modification. Residues 744 to 790 form a disordered region; it reads TVVQSSSPGGGIGGGGGGGGGGGGEEEDSQQESETPDPSGGFRGTME. Positions 751–766 are enriched in gly residues; that stretch reads PGGGIGGGGGGGGGGG. The segment covering 767 to 778 has biased composition (acidic residues); sequence GEEEDSQQESET. A phosphoserine mark is found at serine 808 and serine 839. Phosphothreonine is present on threonine 891. Residues 896–945 are a coiled coil; it reads ACSALQVEVDRLQALVLKCLEEQQKLQQENLQMFTQLQKLNKKLEGGQQV. The disordered stretch occupies residues 940 to 984; that stretch reads EGGQQVGMHSRGTQTAKEEMEMDPKPDLDSESWCLLGTDSCRPSL. Serine 949 carries the post-translational modification Phosphoserine. The span at 955–967 shows a compositional bias: basic and acidic residues; the sequence is AKEEMEMDPKPDL. Serine 983 carries the phosphoserine modification.

It belongs to the protein kinase superfamily. NEK Ser/Thr protein kinase family. NIMA subfamily. In terms of assembly, homodimer; homodimerization is required to activate NEK7. Binds to Ran GTPase. Has a greater affinity for Ran-GDP over Ran-GTP. Interacts with SSRP1 and SUPT16H, the 2 subunits of the FACT complex. Interacts with DYNLL1; phosphorylation at Ser-949 strongly reduces DYNLL1 binding. Mg(2+) serves as cofactor. Post-translationally, autophosphorylated on serine and threonine residues. When complexed with FACT, exhibits markedly elevated phosphorylation on Thr-210. During mitosis, not phosphorylated on Thr-210. Phosphorylated by CDK1 in vitro.

The protein resides in the cytoplasm. Its subcellular location is the nucleus. The catalysed reaction is L-seryl-[protein] + ATP = O-phospho-L-seryl-[protein] + ADP + H(+). The enzyme catalyses L-threonyl-[protein] + ATP = O-phospho-L-threonyl-[protein] + ADP + H(+). Activated during mitosis by intramolecular autophosphorylation. Activity and autophosphorylation is activated by manganese &gt;&gt; magnesium ions. It is not cell-cycle regulated but activity is higher in G0-arrested cells. In terms of biological role, pleiotropic regulator of mitotic progression, participating in the control of spindle dynamics and chromosome separation. Phosphorylates different histones, myelin basic protein, beta-casein, and BICD2. Phosphorylates histone H3 on serine and threonine residues and beta-casein on serine residues. Important for G1/S transition and S phase progression. Phosphorylates NEK6 and NEK7 and stimulates their activity by releasing the autoinhibitory functions of Tyr-108 and Tyr-97 respectively. This Mus musculus (Mouse) protein is Serine/threonine-protein kinase Nek9.